The sequence spans 341 residues: Protein BEARSKIN2 (341 aa).

The NAC domain occupies 9–160 (VPPGFRFHPT…GWVVCRVFMK (152 aa)). A DNA-binding region spans residues 109-166 (IGMRKTLVFYKGRAPHGQKTDWIMHEYRLEDADDPQANPSEDGWVVCRVFMKKNLFKV).

In terms of tissue distribution, expressed throughout the root cap, in both columella (COL) and lateral root cap (LRC) cells, with higher levels in the COL-adjoining LRC than the upper LRC. Also present at low levels expression in the tips of cotyledons and the cotyledon vasculature, as weel as in vasculature of the first pair of true leaves and at the hydathodes.

The protein resides in the nucleus. Transcription activator. Together with BRN1 and SMB, regulates cellular maturation of root cap. Promotes the expression of genes involved in secondary cell walls (SCW) biosynthesis. This is Protein BEARSKIN2 (BRN2) from Arabidopsis thaliana (Mouse-ear cress).